Consider the following 404-residue polypeptide: Cysteine desulfurase IscS (404 aa).

Residues 75–76 (AT), asparagine 155, glutamine 183, and 203–205 (TGH) each bind pyridoxal 5'-phosphate. Residue lysine 206 is modified to N6-(pyridoxal phosphate)lysine. Position 243 (threonine 243) interacts with pyridoxal 5'-phosphate. The Cysteine persulfide intermediate role is filled by cysteine 328. Cysteine 328 serves as a coordination point for [2Fe-2S] cluster.

This sequence belongs to the class-V pyridoxal-phosphate-dependent aminotransferase family. NifS/IscS subfamily. In terms of assembly, homodimer. Forms a heterotetramer with IscU, interacts with other sulfur acceptors. Requires pyridoxal 5'-phosphate as cofactor.

Its subcellular location is the cytoplasm. The enzyme catalyses (sulfur carrier)-H + L-cysteine = (sulfur carrier)-SH + L-alanine. Its pathway is cofactor biosynthesis; iron-sulfur cluster biosynthesis. Its function is as follows. Master enzyme that delivers sulfur to a number of partners involved in Fe-S cluster assembly, tRNA modification or cofactor biosynthesis. Catalyzes the removal of elemental sulfur atoms from cysteine to produce alanine. Functions as a sulfur delivery protein for Fe-S cluster synthesis onto IscU, an Fe-S scaffold assembly protein, as well as other S acceptor proteins. The protein is Cysteine desulfurase IscS of Enterobacter sp. (strain 638).